Here is a 754-residue protein sequence, read N- to C-terminus: Catalase-peroxidase (754 aa).

The interval 1-29 (MGTQPARKLRNRVFPHPHNHRKEKPMAND) is disordered. Residues 7 to 23 (RKLRNRVFPHPHNHRKE) are compositionally biased toward basic residues. Tryptophan 106 functions as the Tryptophan radical intermediate in the catalytic mechanism. Residues 122–249 (WHAAGTYRIA…LAAVQMGLIY (128 aa)) constitute a cross-link (tryptophyl-tyrosyl-methioninium (Trp-Tyr) (with M-275)). Histidine 123 functions as the Proton acceptor in the catalytic mechanism. Positions 249-275 (YVNPEGVDGHPDPLCTAQDVRTTFARM) form a cross-link, tryptophyl-tyrosyl-methioninium (Tyr-Met) (with W-122). Histidine 290 is a heme b binding site.

The protein belongs to the peroxidase family. Peroxidase/catalase subfamily. As to quaternary structure, homodimer. The cofactor is heme b. In terms of processing, formation of the three residue Trp-Tyr-Met cross-link is important for the catalase, but not the peroxidase activity of the enzyme.

The catalysed reaction is H2O2 + AH2 = A + 2 H2O. It carries out the reaction 2 H2O2 = O2 + 2 H2O. Functionally, bifunctional enzyme with both catalase and broad-spectrum peroxidase activity. Also displays NADH oxidase, isoniazid hydrazine lyase and isonicotinoyl-NAD synthase activities. In Synechocystis sp. (strain ATCC 27184 / PCC 6803 / Kazusa), this protein is Catalase-peroxidase.